The following is a 66-amino-acid chain: Putative membrane protein insertion efficiency factor (66 aa).

It belongs to the UPF0161 family.

The protein resides in the cell inner membrane. Could be involved in insertion of integral membrane proteins into the membrane. The chain is Putative membrane protein insertion efficiency factor from Parasynechococcus marenigrum (strain WH8102).